Reading from the N-terminus, the 284-residue chain is Signal peptidase I (284 aa).

The helical transmembrane segment at 4-22 (NFPLLLVIAVAVCGALALV) threads the bilayer. The Cytoplasmic segment spans residues 23–58 (DLVLFAPRRRAAISSYEGQVNEPDPAVLEKLNKEPL). The helical transmembrane segment at 59-77 (LVEYGKSFFPVLFIVLVLR) threads the bilayer. The Periplasmic portion of the chain corresponds to 78–284 (SFLVEPFQIP…PNFSRVGVIH (207 aa)). Catalysis depends on residues S90 and K145.

It belongs to the peptidase S26 family.

It localises to the cell inner membrane. It catalyses the reaction Cleavage of hydrophobic, N-terminal signal or leader sequences from secreted and periplasmic proteins.. The sequence is that of Signal peptidase I (lepB) from Pseudomonas aeruginosa (strain ATCC 15692 / DSM 22644 / CIP 104116 / JCM 14847 / LMG 12228 / 1C / PRS 101 / PAO1).